Consider the following 113-residue polypeptide: Translation initiation factor 1A (113 aa).

The S1-like domain maps to 12-87; that stretch reads EVIRVPLPEG…KRGDIVYRYT (76 aa).

It belongs to the eIF-1A family.

Its function is as follows. Seems to be required for maximal rate of protein biosynthesis. Enhances ribosome dissociation into subunits and stabilizes the binding of the initiator Met-tRNA(I) to 40 S ribosomal subunits. The chain is Translation initiation factor 1A (eIF1A) from Pyrococcus abyssi (strain GE5 / Orsay).